We begin with the raw amino-acid sequence, 322 residues long: Protein-methionine-sulfoxide reductase catalytic subunit MsrP (322 aa).

A signal peptide (tat-type signal) is located at residues 1 to 59 (MSFRDALNLPSSEITDESVYRDRRRLLQLLALTPALGVAGCAEADPPPPPKTVVTPAQA). Residues N79, 82–83 (YE), C137, T172, N220, R225, and 236–238 (SIK) each bind Mo-molybdopterin.

It belongs to the MsrP family. As to quaternary structure, heterodimer of a catalytic subunit (MsrP) and a heme-binding subunit (MsrQ). The cofactor is Mo-molybdopterin. In terms of processing, predicted to be exported by the Tat system. The position of the signal peptide cleavage has not been experimentally proven.

The protein resides in the periplasm. The enzyme catalyses L-methionyl-[protein] + a quinone + H2O = L-methionyl-(S)-S-oxide-[protein] + a quinol. The catalysed reaction is L-methionyl-[protein] + a quinone + H2O = L-methionyl-(R)-S-oxide-[protein] + a quinol. Its function is as follows. Part of the MsrPQ system that repairs oxidized periplasmic proteins containing methionine sulfoxide residues (Met-O), using respiratory chain electrons. Thus protects these proteins from oxidative-stress damage caused by reactive species of oxygen and chlorine generated by the host defense mechanisms. MsrPQ is essential for the maintenance of envelope integrity under bleach stress, rescuing a wide series of structurally unrelated periplasmic proteins from methionine oxidation. The catalytic subunit MsrP is non-stereospecific, being able to reduce both (R-) and (S-) diastereoisomers of methionine sulfoxide. The chain is Protein-methionine-sulfoxide reductase catalytic subunit MsrP from Xanthomonas axonopodis pv. citri (strain 306).